The following is a 297-amino-acid chain: CCAAT/enhancer-binding protein beta (297 aa).

Positions 1–22 (MHRLLAWDAACLPPPPAAFRPM) are required for Lys-134 sumoylation. R3 carries the post-translational modification Asymmetric dimethylarginine; by CARM1. The interval 22-105 (MEVANFYYEP…YGAKPSKKPS (84 aa)) is required for MYC transcriptional repression. K39 is subject to N6-acetyllysine; alternate. Residue K39 is modified to N6-methylated lysine; alternate. Residues K99 and K102 each carry the N6-acetyllysine; by KAT2A and KAT2B modification. N6-acetyllysine; by KAT2A and KAT2B; alternate is present on K103. A Glycyl lysine isopeptide (Lys-Gly) (interchain with G-Cter in SUMO2); alternate cross-link involves residue K103. The residue at position 105 (S105) is a Phosphoserine; by RPS6KA1 and PKC/PRKCA. K134 participates in a covalent cross-link: Glycyl lysine isopeptide (Lys-Gly) (interchain with G-Cter in SUMO2); alternate. K134 is covalently cross-linked (Glycyl lysine isopeptide (Lys-Gly) (interchain with G-Cter in SUMO); alternate). Residue K145 forms a Glycyl lysine isopeptide (Lys-Gly) (interchain with G-Cter in SUMO2) linkage. Positions 172 to 201 (SGSSGSLSTSSSSSPPGTPSPADAKAAPAA) are disordered. T180 carries the phosphothreonine; by GSK3-beta modification. 2 O-linked (GlcNAc) serine glycosylation sites follow: S181 and S182. Phosphoserine; by GSK3-beta is present on S185. T189 bears the Phosphothreonine; by RPS6KA1, CDK2 and MAPK mark. Glycyl lysine isopeptide (Lys-Gly) (interchain with G-Cter in SUMO2) cross-links involve residues K212 and K214. A bZIP domain is found at 223–286 (SDEYKMRRER…STLRNLFKQL (64 aa)). A basic motif region spans residues 227–247 (KMRRERNNIAVRKSRDKAKMR). S240 is modified (phosphoserine; by PKC/PRKCA). The interval 249-256 (LETQHKVL) is leucine-zipper. Residue S277 is modified to Phosphoserine; by CaMK2. K284 participates in a covalent cross-link: Glycyl lysine isopeptide (Lys-Gly) (interchain with G-Cter in SUMO2).

The protein belongs to the bZIP family. C/EBP subfamily. Binds DNA as a homodimer and as a heterodimer. Interacts with MYB; within the complex, MYB and CEBPB bind to different promoter regions. Interacts with ATF4. Binds DNA as a heterodimer with ATF4. Can form stable heterodimers with CEBPA, CEBPD, CEBPE and CEBPG. Interacts with SIX1. Isoform 2 and isoform 3 also form heterodimers. Interacts with TRIM28 and PTGES2. Interacts with PRDM16. Interacts with CCDC85B. Forms a complex with THOC5. Interacts with ZNF638; this interaction increases transcriptional activation. Interacts with CIDEA and CIDEC; these interactions increase transcriptional activation of a subset of CEBPB downstream target genes. Interacts with DDIT3/CHOP. Interacts with EP300; recruits EP300 to chromatin. Interacts with RORA; the interaction disrupts interaction with EP300. Interacts (not methylated) with MED23, MED26, SMARCA2, SMARCB1 and SMARCC1. Interacts with KAT2A and KAT2B. Interacts with ATF5; EP300 is required for ATF5 and CEBPB interaction and DNA binding. Interacts with NFE2L1; the heterodimer represses expression of DSPP during odontoblast differentiation. Post-translationally, phosphorylated at Thr-189 by MAPK and CDK2, serves to prime phosphorylation at Thr-180 and Ser-185 by GSK3B and acquire DNA-binding as well as transactivation activities, required to induce adipogenesis. MAPK and CDK2 act sequentially to maintain Thr-189 in the primed phosphorylated state during mitotical cloning expansion and thereby progression of terminal differentiation. Phosphorylation at Ser-105 enhances transactivation activity. Phosphorylation at Ser-277 in response to calcium increases transactivation activity. Phosphorylated at Thr-189 by RPS6KA1. In terms of processing, methylated. Methylation at Arg-3 by CARM1 and at Lys-39 by EHMT2 inhibit transactivation activity. Methylation is probably inhibited by phosphorylation at Thr-189. Sumoylated by polymeric chains of SUMO2 or SUMO3. Sumoylation at Lys-134 is required for inhibition of T-cells proliferation. In adipocytes, sumoylation at Lys-134 by PIAS1 leads to ubiquitination and subsequent proteasomal degradation. Desumoylated by SENP2, which abolishes ubiquitination and stabilizes protein levels. Post-translationally, ubiquitinated, leading to proteasomal degradation. In terms of processing, O-glycosylated, glycosylation at Ser-181 and Ser-182 prevents phosphorylation on Thr-189, Ser-185 and Thr-180 and DNA binding activity which delays the adipocyte differentiation program. Acetylated. Acetylation at Lys-39 is an important and dynamic regulatory event that contributes to its ability to transactivate target genes, including those associated with adipogenesis and adipocyte function. Deacetylation by HDAC1 represses its transactivation activity. Acetylated by KAT2A and KAT2B within a cluster of lysine residues between amino acids 99-103, this acetylation is strongly induced by glucocorticoid treatment and enhances transactivation activity. As to expression, liver and lung.

The protein localises to the nucleus. It localises to the cytoplasm. In terms of biological role, important transcription factor regulating the expression of genes involved in immune and inflammatory responses. Also plays a significant role in adipogenesis, as well as in the gluconeogenic pathway, liver regeneration, and hematopoiesis. The consensus recognition site is 5'-T[TG]NNGNAA[TG]-3'. Its functional capacity is governed by protein interactions and post-translational protein modifications. During early embryogenesis, plays essential and redundant roles with CEBPA. Has a promitotic effect on many cell types such as hepatocytes and adipocytes but has an antiproliferative effect on T-cells by repressing MYC expression, facilitating differentiation along the T-helper 2 lineage. Binds to regulatory regions of several acute-phase and cytokines genes and plays a role in the regulation of acute-phase reaction and inflammation. Also plays a role in intracellular bacteria killing. During adipogenesis, is rapidly expressed and, after activation by phosphorylation, induces CEBPA and PPARG, which turn on the series of adipocyte genes that give rise to the adipocyte phenotype. The delayed transactivation of the CEBPA and PPARG genes by CEBPB appears necessary to allow mitotic clonal expansion and thereby progression of terminal differentiation. Essential for female reproduction because of a critical role in ovarian follicle development. Restricts osteoclastogenesis: together with NFE2L1; represses expression of DSPP during odontoblast differentiation. Essential for gene expression induction in activated macrophages. Plays a major role in immune responses such as CD4(+) T-cell response, granuloma formation and endotoxin shock. Not essential for intracellular bacteria killing. Its function is as follows. Acts as a dominant negative through heterodimerization with isoform 2. Promotes osteoblast differentiation and osteoclastogenesis. The polypeptide is CCAAT/enhancer-binding protein beta (Rattus norvegicus (Rat)).